Reading from the N-terminus, the 290-residue chain is Beta-lactamase OXY-2 (290 aa).

Residues Met-1–Ala-27 form the signal peptide. Ser-72 serves as the catalytic Acyl-ester intermediate. Residue Lys-236 to Gly-238 participates in substrate binding.

This sequence belongs to the class-A beta-lactamase family.

The catalysed reaction is a beta-lactam + H2O = a substituted beta-amino acid. Functionally, hydrolyzes broad-spectrum beta-lactam antibiotics. Active against all third-generation cephalosporins but ceftazidime. The chain is Beta-lactamase OXY-2 (bla) from Klebsiella oxytoca.